Here is a 1358-residue protein sequence, read N- to C-terminus: DNA-directed RNA polymerase subunit beta (1358 aa).

Residues 1033-1051 (QGLEDRKKEHEARFDDKKG) are compositionally biased toward basic and acidic residues. The interval 1033 to 1053 (QGLEDRKKEHEARFDDKKGKL) is disordered.

It belongs to the RNA polymerase beta chain family. As to quaternary structure, the RNAP catalytic core consists of 2 alpha, 1 beta, 1 beta' and 1 omega subunit. When a sigma factor is associated with the core the holoenzyme is formed, which can initiate transcription.

The catalysed reaction is RNA(n) + a ribonucleoside 5'-triphosphate = RNA(n+1) + diphosphate. Functionally, DNA-dependent RNA polymerase catalyzes the transcription of DNA into RNA using the four ribonucleoside triphosphates as substrates. The chain is DNA-directed RNA polymerase subunit beta from Marinobacter nauticus (strain ATCC 700491 / DSM 11845 / VT8) (Marinobacter aquaeolei).